Consider the following 169-residue polypeptide: Calcium-binding protein G (169 aa).

EF-hand domains lie at 9 to 44 (KIFQ…KMNG), 60 to 83 (VDMD…QAKK), 92 to 127 (AALA…QGYN), and 133 to 162 (DYVL…KRLA). Residues Asp-105, Asp-107, Asp-109, Lys-111, Glu-116, Asp-140, Asp-142, Asp-144, Tyr-146, and Glu-151 each contribute to the Ca(2+) site.

The chain is Calcium-binding protein G (cbpG) from Dictyostelium discoideum (Social amoeba).